Here is a 123-residue protein sequence, read N- to C-terminus: Large ribosomal subunit protein bL12 (123 aa).

Belongs to the bacterial ribosomal protein bL12 family. In terms of assembly, homodimer. Part of the ribosomal stalk of the 50S ribosomal subunit. Forms a multimeric L10(L12)X complex, where L10 forms an elongated spine to which 2 to 4 L12 dimers bind in a sequential fashion. Binds GTP-bound translation factors.

Functionally, forms part of the ribosomal stalk which helps the ribosome interact with GTP-bound translation factors. Is thus essential for accurate translation. In Aliarcobacter butzleri (strain RM4018) (Arcobacter butzleri), this protein is Large ribosomal subunit protein bL12.